Consider the following 318-residue polypeptide: Protoheme IX farnesyltransferase (318 aa).

9 consecutive transmembrane segments (helical) span residues 37–57 (VMEL…RGLP), 59–79 (IWLI…AGAF), 108–128 (EALV…WFGA), 131–151 (LAGL…TLIL), 158–178 (NIVW…AAVT), 183–203 (WPAI…YWPL), 216–238 (VPML…YTWA), 249–269 (LGHA…WFLL), and 296–316 (ISYL…GMPL).

The protein belongs to the UbiA prenyltransferase family. Protoheme IX farnesyltransferase subfamily.

The protein resides in the cell membrane. The catalysed reaction is heme b + (2E,6E)-farnesyl diphosphate + H2O = Fe(II)-heme o + diphosphate. It functions in the pathway porphyrin-containing compound metabolism; heme O biosynthesis; heme O from protoheme: step 1/1. Converts heme B (protoheme IX) to heme O by substitution of the vinyl group on carbon 2 of heme B porphyrin ring with a hydroxyethyl farnesyl side group. This Renibacterium salmoninarum (strain ATCC 33209 / DSM 20767 / JCM 11484 / NBRC 15589 / NCIMB 2235) protein is Protoheme IX farnesyltransferase.